A 447-amino-acid chain; its full sequence is Na(+)-translocating NADH-quinone reductase subunit A (447 aa).

This sequence belongs to the NqrA family. Composed of six subunits; NqrA, NqrB, NqrC, NqrD, NqrE and NqrF.

It catalyses the reaction a ubiquinone + n Na(+)(in) + NADH + H(+) = a ubiquinol + n Na(+)(out) + NAD(+). In terms of biological role, NQR complex catalyzes the reduction of ubiquinone-1 to ubiquinol by two successive reactions, coupled with the transport of Na(+) ions from the cytoplasm to the periplasm. NqrA to NqrE are probably involved in the second step, the conversion of ubisemiquinone to ubiquinol. The sequence is that of Na(+)-translocating NADH-quinone reductase subunit A from Photorhabdus laumondii subsp. laumondii (strain DSM 15139 / CIP 105565 / TT01) (Photorhabdus luminescens subsp. laumondii).